Reading from the N-terminus, the 448-residue chain is Phosphoglucosamine mutase (448 aa).

Ser100 serves as the catalytic Phosphoserine intermediate. Residues Ser100, Asp240, Asp242, and Asp244 each contribute to the Mg(2+) site. A Phosphoserine modification is found at Ser100.

Belongs to the phosphohexose mutase family. Mg(2+) serves as cofactor. Activated by phosphorylation.

It catalyses the reaction alpha-D-glucosamine 1-phosphate = D-glucosamine 6-phosphate. In terms of biological role, catalyzes the conversion of glucosamine-6-phosphate to glucosamine-1-phosphate. This Bacillus anthracis (strain A0248) protein is Phosphoglucosamine mutase.